A 341-amino-acid chain; its full sequence is Anthranilate phosphoribosyltransferase (341 aa).

Residues Gly83, Ser91, Asn93–Thr96, Lys111–Arg115, and Ser123 each bind 5-phospho-alpha-D-ribose 1-diphosphate. An anthranilate-binding site is contributed by Gly83. Position 95 (Ser95) interacts with Mg(2+). Position 114 (Asn114) interacts with anthranilate. An anthranilate-binding site is contributed by Arg169. Residues Asp228 and Glu229 each contribute to the Mg(2+) site.

This sequence belongs to the anthranilate phosphoribosyltransferase family. In terms of assembly, homodimer. Mg(2+) serves as cofactor.

The enzyme catalyses N-(5-phospho-beta-D-ribosyl)anthranilate + diphosphate = 5-phospho-alpha-D-ribose 1-diphosphate + anthranilate. The protein operates within amino-acid biosynthesis; L-tryptophan biosynthesis; L-tryptophan from chorismate: step 2/5. Functionally, catalyzes the transfer of the phosphoribosyl group of 5-phosphorylribose-1-pyrophosphate (PRPP) to anthranilate to yield N-(5'-phosphoribosyl)-anthranilate (PRA). The sequence is that of Anthranilate phosphoribosyltransferase from Hyphomonas neptunium (strain ATCC 15444).